Here is a 287-residue protein sequence, read N- to C-terminus: 4-hydroxybenzoate octaprenyltransferase (287 aa).

7 helical membrane-spanning segments follow: residues 30 to 50 (ALWI…FALG), 92 to 112 (IAIA…LNGL), 133 to 153 (FFAI…PMAF), 158 to 178 (DTVP…SVAY), 207 to 227 (VLAI…LGAA), 232 to 252 (WPYW…YTLI), and 266 to 286 (HNNW…ALAV).

Belongs to the UbiA prenyltransferase family. It depends on Mg(2+) as a cofactor.

Its subcellular location is the cell inner membrane. The catalysed reaction is all-trans-octaprenyl diphosphate + 4-hydroxybenzoate = 4-hydroxy-3-(all-trans-octaprenyl)benzoate + diphosphate. It participates in cofactor biosynthesis; ubiquinone biosynthesis. Its function is as follows. Catalyzes the prenylation of para-hydroxybenzoate (PHB) with an all-trans polyprenyl group. Mediates the second step in the final reaction sequence of ubiquinone-8 (UQ-8) biosynthesis, which is the condensation of the polyisoprenoid side chain with PHB, generating the first membrane-bound Q intermediate 3-octaprenyl-4-hydroxybenzoate. This chain is 4-hydroxybenzoate octaprenyltransferase, found in Burkholderia pseudomallei (strain 1106a).